A 342-amino-acid chain; its full sequence is Ribosomal RNA small subunit methyltransferase H (342 aa).

S-adenosyl-L-methionine contacts are provided by residues 42-44 (GGH), D61, F88, D119, and Q126.

It belongs to the methyltransferase superfamily. RsmH family.

It is found in the cytoplasm. It carries out the reaction cytidine(1402) in 16S rRNA + S-adenosyl-L-methionine = N(4)-methylcytidine(1402) in 16S rRNA + S-adenosyl-L-homocysteine + H(+). Specifically methylates the N4 position of cytidine in position 1402 (C1402) of 16S rRNA. This Corynebacterium jeikeium (strain K411) protein is Ribosomal RNA small subunit methyltransferase H.